The sequence spans 302 residues: Lipoyl synthase (302 aa).

[4Fe-4S] cluster-binding residues include Cys44, Cys49, Cys55, Cys70, Cys74, Cys77, and Ser283. A Radical SAM core domain is found at 56–272 (WSKKHATVMI…ARVAKSKGFL (217 aa)).

It belongs to the radical SAM superfamily. Lipoyl synthase family. [4Fe-4S] cluster serves as cofactor.

The protein resides in the cytoplasm. It catalyses the reaction [[Fe-S] cluster scaffold protein carrying a second [4Fe-4S](2+) cluster] + N(6)-octanoyl-L-lysyl-[protein] + 2 oxidized [2Fe-2S]-[ferredoxin] + 2 S-adenosyl-L-methionine + 4 H(+) = [[Fe-S] cluster scaffold protein] + N(6)-[(R)-dihydrolipoyl]-L-lysyl-[protein] + 4 Fe(3+) + 2 hydrogen sulfide + 2 5'-deoxyadenosine + 2 L-methionine + 2 reduced [2Fe-2S]-[ferredoxin]. Its pathway is protein modification; protein lipoylation via endogenous pathway; protein N(6)-(lipoyl)lysine from octanoyl-[acyl-carrier-protein]: step 2/2. Functionally, catalyzes the radical-mediated insertion of two sulfur atoms into the C-6 and C-8 positions of the octanoyl moiety bound to the lipoyl domains of lipoate-dependent enzymes, thereby converting the octanoylated domains into lipoylated derivatives. The sequence is that of Lipoyl synthase from Orientia tsutsugamushi (strain Ikeda) (Rickettsia tsutsugamushi).